A 529-amino-acid polypeptide reads, in one-letter code: Plexin domain-containing protein 2 (529 aa).

Residues 1–30 form the signal peptide; sequence MARFPKADLAAAGVMLLCHFFTDQFQFADG. Topologically, residues 31–454 are extracellular; the sequence is KPGDQILDWQ…AEKKGGTLHA (424 aa). A disordered region spans residues 80–104; sequence ASVGQDSPEPRSFTDLLLDDGQDNN. Residues Asn103 and Asn160 are each glycosylated (N-linked (GlcNAc...) asparagine). The PSI domain maps to 327 to 372; the sequence is TCLQFNRCGPCVSSQIGFNCSWCSKLQRCSSGFDRHRQDWVDSGCP. A helical membrane pass occupies residues 455–475; it reads GLIIGILILVLIVATAILVTV. Over 476 to 529 the chain is Cytoplasmic; it reads YMYHHPTSAASIFFIERRPSRWPAMKFRRGSGHPAYAEVEPVGEKEGFIVSEQC. Ser506 bears the Phosphoserine mark.

Belongs to the plexin family. Interacts with CTTN. In terms of tissue distribution, expressed in the endothelial cells of the stroma but not in the endothelial cells of normal colonic tissue.

The protein localises to the membrane. May play a role in tumor angiogenesis. In Homo sapiens (Human), this protein is Plexin domain-containing protein 2 (PLXDC2).